Reading from the N-terminus, the 322-residue chain is Ferric-anguibactin-binding protein FatB (322 aa).

Residues 1 to 22 (MFKSTLNIAVAIVCSSLVTLTG) form the signal peptide. Residue Cys-23 is the site of N-palmitoyl cysteine attachment. Cys-23 carries the S-diacylglycerol cysteine lipid modification. Positions 57–322 (RVAALDMNEV…IDDIIKGYQS (266 aa)) constitute a Fe/B12 periplasmic-binding domain.

This sequence belongs to the bacterial solute-binding protein 8 family. In terms of assembly, part of an iron transport system composed of the outer membrane receptor FatA, the periplasmic binding protein FatB and the inner membrane proteins FatC and FatD.

The protein localises to the cell inner membrane. In terms of biological role, involved in the uptake of iron in complex with the siderophore anguibactin. Binds ferric-anguibactin in the periplasm and mediates its transport into the cytoplasm. The chain is Ferric-anguibactin-binding protein FatB from Vibrio anguillarum (strain ATCC 68554 / 775) (Listonella anguillarum).